Consider the following 517-residue polypeptide: Retinal dehydrogenase 2 (517 aa).

NAD(+) contacts are provided by residues I184 to W186, K210 to E213, and S264 to E266. E286 serves as the catalytic Proton acceptor. The active-site Nucleophile is C320. NAD(+) is bound by residues K366–K370 and E417.

This sequence belongs to the aldehyde dehydrogenase family. Homotetramer. As to expression, expressed in the high vocal center (HVC) which integrates auditory and motor activities and constitutes a nodal nucleus on the song system.

Its subcellular location is the cytoplasm. It carries out the reaction retinal + NAD(+) + H2O = retinoate + NADH + 2 H(+). It catalyses the reaction all-trans-retinal + NAD(+) + H2O = all-trans-retinoate + NADH + 2 H(+). The catalysed reaction is all-trans-13,14-dihydroretinal + NAD(+) + H2O = all-trans-13,14-dihydroretinoate + NADH + 2 H(+). Its pathway is cofactor metabolism; retinol metabolism. Its function is as follows. Catalyzes the NAD-dependent oxidation of aldehyde substrates, such as all-trans-retinal and all-trans-13,14-dihydroretinal, to their corresponding carboxylic acids, all-trans-retinoate and all-trans-13,14-dihydroretinoate, respectively. Retinoate signaling is critical for the transcriptional control of many genes, for instance it is crucial for initiation of meiosis in both male and female. Recognizes retinal as substrate, both in its free form and when bound to cellular retinol-binding protein. Lacks activity with benzaldehyde, acetaldehyde and octanal. Displays complete lack of activity with citral. Plays a significant role in the acquisition and production of learned songs. The protein is Retinal dehydrogenase 2 (ALDH1A2) of Taeniopygia guttata (Zebra finch).